A 326-amino-acid chain; its full sequence is DNA-directed RNA polymerase subunit alpha (326 aa).

An alpha N-terminal domain (alpha-NTD) region spans residues 1–231; sequence MQTNLLKPKI…DQLVVFAALE (231 aa). Positions 247 to 326 are alpha C-terminal domain (alpha-CTD); that stretch reads VDPMLMRPVD…ESWPPANLEK (80 aa).

The protein belongs to the RNA polymerase alpha chain family. Homodimer. The RNAP catalytic core consists of 2 alpha, 1 beta, 1 beta' and 1 omega subunit. When a sigma factor is associated with the core the holoenzyme is formed, which can initiate transcription.

It catalyses the reaction RNA(n) + a ribonucleoside 5'-triphosphate = RNA(n+1) + diphosphate. Its function is as follows. DNA-dependent RNA polymerase catalyzes the transcription of DNA into RNA using the four ribonucleoside triphosphates as substrates. In Polynucleobacter asymbioticus (strain DSM 18221 / CIP 109841 / QLW-P1DMWA-1) (Polynucleobacter necessarius subsp. asymbioticus), this protein is DNA-directed RNA polymerase subunit alpha.